Here is a 308-residue protein sequence, read N- to C-terminus: Transcription factor JunB (308 aa).

Positions 229–256 (RIKAERKRLRNRLAATKCRKRKLERISR) are basic motif. A bZIP domain is found at 229 to 292 (RIKAERKRLR…AQLKQKVLRH (64 aa)). The tract at residues 257–285 (LEEKVKVLKNDNAGLSNTASVLRDQVAQL) is leucine-zipper.

This sequence belongs to the bZIP family. Jun subfamily. As to quaternary structure, binds DNA as a homodimer or as a heterodimer with another member of the jun/fos family.

The protein localises to the nucleus. Its function is as follows. Transcription factor involved in regulating gene activity following the primary growth factor response. Binds to the DNA sequence 5'-TGA[CG]TCA-3'. This chain is Transcription factor JunB (junb), found in Cyprinus carpio (Common carp).